We begin with the raw amino-acid sequence, 192 residues long: Probable GTP-binding protein EngB (192 aa).

In terms of domain architecture, EngB-type G spans 22-192 (QIPEIVFAGR…LLAHLAQYIR (171 aa)). Residues 30–37 (GRSNVGKS), 57–61 (GKTRL), 75–78 (DLPG), 142–145 (TKDD), and 172–174 (YSS) contribute to the GTP site. The Mg(2+) site is built by Ser-37 and Thr-59.

This sequence belongs to the TRAFAC class TrmE-Era-EngA-EngB-Septin-like GTPase superfamily. EngB GTPase family. Requires Mg(2+) as cofactor.

Necessary for normal cell division and for the maintenance of normal septation. This Chlorobium phaeobacteroides (strain DSM 266 / SMG 266 / 2430) protein is Probable GTP-binding protein EngB.